The following is a 345-amino-acid chain: Adenylosuccinate synthetase (345 aa).

GTP-binding positions include 18 to 24 (GDEGKGK) and 48 to 50 (GHT). Asp-19 (proton acceptor) is an active-site residue. Residues Asp-19 and Gly-48 each contribute to the Mg(2+) site. IMP is bound by residues 19-22 (DEGK), 46-49 (NAGH), Thr-133, Arg-147, Gln-185, Thr-200, and Arg-262. His-49 functions as the Proton donor in the catalytic mechanism. Position 258–264 (258–264 (TVTGRRR)) interacts with substrate. GTP contacts are provided by residues Arg-264, 290–292 (GLD), and 330–332 (STG).

Belongs to the adenylosuccinate synthetase family. Homodimer. Mg(2+) serves as cofactor.

The protein resides in the cytoplasm. It carries out the reaction IMP + L-aspartate + GTP = N(6)-(1,2-dicarboxyethyl)-AMP + GDP + phosphate + 2 H(+). It participates in purine metabolism; AMP biosynthesis via de novo pathway; AMP from IMP: step 1/2. Its function is as follows. Plays an important role in the de novo pathway of purine nucleotide biosynthesis. Catalyzes the first committed step in the biosynthesis of AMP from IMP. The chain is Adenylosuccinate synthetase from Methanocaldococcus jannaschii (strain ATCC 43067 / DSM 2661 / JAL-1 / JCM 10045 / NBRC 100440) (Methanococcus jannaschii).